Here is a 297-residue protein sequence, read N- to C-terminus: Protein-methionine-sulfoxide reductase catalytic subunit MsrP (297 aa).

Positions 1–35 form a signal peptide, tat-type signal; that stretch reads MLITPEKLYKQRRNFLKLGAGALISSSVLASKLSA. Mo-molybdopterin contacts are provided by residues 62–63, cysteine 116, threonine 151, asparagine 201, arginine 206, and 217–219; these read YE and SIK.

It belongs to the MsrP family. As to quaternary structure, heterodimer of a catalytic subunit (MsrP) and a heme-binding subunit (MsrQ). Requires Mo-molybdopterin as cofactor. In terms of processing, predicted to be exported by the Tat system. The position of the signal peptide cleavage has not been experimentally proven.

Its subcellular location is the periplasm. The enzyme catalyses L-methionyl-[protein] + a quinone + H2O = L-methionyl-(S)-S-oxide-[protein] + a quinol. It carries out the reaction L-methionyl-[protein] + a quinone + H2O = L-methionyl-(R)-S-oxide-[protein] + a quinol. Functionally, part of the MsrPQ system that repairs oxidized periplasmic proteins containing methionine sulfoxide residues (Met-O), using respiratory chain electrons. Thus protects these proteins from oxidative-stress damage caused by reactive species of oxygen and chlorine generated by the host defense mechanisms. MsrPQ is essential for the maintenance of envelope integrity under bleach stress, rescuing a wide series of structurally unrelated periplasmic proteins from methionine oxidation. The catalytic subunit MsrP is non-stereospecific, being able to reduce both (R-) and (S-) diastereoisomers of methionine sulfoxide. In Campylobacter jejuni subsp. jejuni serotype O:2 (strain ATCC 700819 / NCTC 11168), this protein is Protein-methionine-sulfoxide reductase catalytic subunit MsrP.